Here is a 113-residue protein sequence, read N- to C-terminus: Putative membrane protein insertion efficiency factor (113 aa).

The protein belongs to the UPF0161 family.

The protein resides in the cell inner membrane. Could be involved in insertion of integral membrane proteins into the membrane. The sequence is that of Putative membrane protein insertion efficiency factor from Campylobacter curvus (strain 525.92).